The sequence spans 246 residues: Ribosome maturation factor RimM (246 aa).

Positions 1–15 (MKRKQESKGAGEKRQ) are enriched in basic and acidic residues. The segment at 1-63 (MKRKQESKGA…NPQFTTPNPD (63 aa)) is disordered. A compositionally biased stretch (pro residues) spans 45–54 (VPSPQSPIPN). Residues 158–239 (GEDEYHVVDL…RIEITPPPGL (82 aa)) enclose the PRC barrel domain.

Belongs to the RimM family. Binds ribosomal protein uS19.

The protein resides in the cytoplasm. Its function is as follows. An accessory protein needed during the final step in the assembly of 30S ribosomal subunit, possibly for assembly of the head region. Essential for efficient processing of 16S rRNA. May be needed both before and after RbfA during the maturation of 16S rRNA. It has affinity for free ribosomal 30S subunits but not for 70S ribosomes. The sequence is that of Ribosome maturation factor RimM from Nostoc sp. (strain PCC 7120 / SAG 25.82 / UTEX 2576).